A 241-amino-acid polypeptide reads, in one-letter code: Thiamine import ATP-binding protein ThiQ (241 aa).

In terms of domain architecture, ABC transporter spans 7 to 235 (IRLSDVRFSY…AGPEALRHYI (229 aa)). ATP is bound at residue 37–44 (GPSGSGKS).

Belongs to the ABC transporter superfamily. Thiamine importer (TC 3.A.1.19.1) family. The complex is composed of two ATP-binding proteins (ThiQ), two transmembrane proteins (ThiP) and a solute-binding protein (ThiB).

The protein localises to the cell inner membrane. It catalyses the reaction thiamine(out) + ATP + H2O = thiamine(in) + ADP + phosphate + H(+). Part of the ABC transporter complex ThiBPQ involved in thiamine import. Responsible for energy coupling to the transport system. This Brucella melitensis biotype 1 (strain ATCC 23456 / CCUG 17765 / NCTC 10094 / 16M) protein is Thiamine import ATP-binding protein ThiQ.